The primary structure comprises 492 residues: NADH-quinone oxidoreductase subunit N (492 aa).

The next 14 helical transmembrane spans lie at 13 to 33 (MLPVLLVLVGAIVSTLGGFWL), 43 to 63 (ILFVLASGASLVWLWGGAPWA), 82 to 102 (AALLLGGTVLLGALLTLLVSL), 110 to 132 (VSFAEFDALLMYAVTGCLLIAFS), 136 to 155 (IVMLIGLEIMSLASYVLATL), 169 to 189 (FLLGSVGSAILIYGLAFLYGA), 210 to 230 (IGILVTGTLLVLSGFGVKIAL), 245 to 265 (PTLVSLFLSTVVKVAAFAGML), 272 to 292 (LAAGPGWHSVLQILVALTLVI), 306 to 326 (LLAYSAVAHTGFLAMTLLGDT), 331 to 351 (AALGYYLLVYTLMTVGALAVV), 377 to 397 (AVALAFCLASLAGLPPFAGFF), 410 to 430 (GYLLISVLAVLSSVAALVYYL), and 457 to 477 (VAVALSLIGIVVLGLLPNLWY).

It belongs to the complex I subunit 2 family. NDH-1 is composed of 15 different subunits. Subunits NuoA, H, J, K, L, M, N constitute the membrane sector of the complex.

The protein resides in the cell membrane. It catalyses the reaction a quinone + NADH + 5 H(+)(in) = a quinol + NAD(+) + 4 H(+)(out). Functionally, NDH-1 shuttles electrons from NADH, via FMN and iron-sulfur (Fe-S) centers, to quinones in the respiratory chain. The immediate electron acceptor for the enzyme in this species is believed to be a menaquinone. Couples the redox reaction to proton translocation (for every two electrons transferred, four hydrogen ions are translocated across the cytoplasmic membrane), and thus conserves the redox energy in a proton gradient. The chain is NADH-quinone oxidoreductase subunit N from Deinococcus radiodurans (strain ATCC 13939 / DSM 20539 / JCM 16871 / CCUG 27074 / LMG 4051 / NBRC 15346 / NCIMB 9279 / VKM B-1422 / R1).